A 35-amino-acid chain; its full sequence is MEVNILAFIATALFIIIPTAFLLILYVKTASQSDS.

The chain crosses the membrane as a helical span at residues 5 to 25 (ILAFIATALFIIIPTAFLLIL).

This sequence belongs to the PsbM family. PSII is composed of 1 copy each of membrane proteins PsbA, PsbB, PsbC, PsbD, PsbE, PsbF, PsbH, PsbI, PsbJ, PsbK, PsbL, PsbM, PsbT, PsbX, PsbY, PsbZ, Psb30/Ycf12, at least 3 peripheral proteins of the oxygen-evolving complex and a large number of cofactors. It forms dimeric complexes.

It localises to the plastid. The protein localises to the chloroplast thylakoid membrane. One of the components of the core complex of photosystem II (PSII). PSII is a light-driven water:plastoquinone oxidoreductase that uses light energy to abstract electrons from H(2)O, generating O(2) and a proton gradient subsequently used for ATP formation. It consists of a core antenna complex that captures photons, and an electron transfer chain that converts photonic excitation into a charge separation. This subunit is found at the monomer-monomer interface. This is Photosystem II reaction center protein M from Chara vulgaris (Common stonewort).